We begin with the raw amino-acid sequence, 92 residues long: Small ribosomal subunit protein uS15c (92 aa).

The protein belongs to the universal ribosomal protein uS15 family. In terms of assembly, part of the 30S ribosomal subunit.

Its subcellular location is the plastid. The protein resides in the chloroplast. In Lemna minor (Common duckweed), this protein is Small ribosomal subunit protein uS15c (rps15-A).